A 336-amino-acid chain; its full sequence is Adenosine deaminase (336 aa).

Zn(2+) contacts are provided by His-15 and His-17. Residues His-17, Asp-19, and Gly-172 each contribute to the substrate site. Residue His-199 participates in Zn(2+) binding. The active-site Proton donor is Glu-202. A Zn(2+)-binding site is contributed by Asp-279.

Belongs to the metallo-dependent hydrolases superfamily. Adenosine and AMP deaminases family. Adenosine deaminase subfamily. The cofactor is Zn(2+).

It carries out the reaction adenosine + H2O + H(+) = inosine + NH4(+). The catalysed reaction is 2'-deoxyadenosine + H2O + H(+) = 2'-deoxyinosine + NH4(+). In terms of biological role, catalyzes the hydrolytic deamination of adenosine and 2-deoxyadenosine. In Streptococcus thermophilus (strain ATCC BAA-491 / LMD-9), this protein is Adenosine deaminase.